Here is a 546-residue protein sequence, read N- to C-terminus: CTP synthase (546 aa).

The segment at 1-266 (MTKYIFVTGG…GDYLVERLGL (266 aa)) is amidoligase domain. Serine 13 contributes to the CTP binding site. Residue serine 13 coordinates UTP. 14–19 (SVGKGI) provides a ligand contact to ATP. Tyrosine 54 provides a ligand contact to L-glutamine. Aspartate 71 contacts ATP. 2 residues coordinate Mg(2+): aspartate 71 and glutamate 141. CTP is bound by residues 148-150 (DIE), 187-192 (KTKPTQ), and lysine 223. Residues 187–192 (KTKPTQ) and lysine 223 each bind UTP. The region spanning 291-533 (PIALVGKYVE…VAAAAQTLLA (243 aa)) is the Glutamine amidotransferase type-1 domain. An L-glutamine-binding site is contributed by glycine 353. Catalysis depends on cysteine 380, which acts as the Nucleophile; for glutamine hydrolysis. L-glutamine is bound by residues 381 to 384 (LGMQ), glutamate 404, and arginine 461. Active-site residues include histidine 506 and glutamate 508.

This sequence belongs to the CTP synthase family. In terms of assembly, homotetramer.

It catalyses the reaction UTP + L-glutamine + ATP + H2O = CTP + L-glutamate + ADP + phosphate + 2 H(+). The enzyme catalyses L-glutamine + H2O = L-glutamate + NH4(+). It carries out the reaction UTP + NH4(+) + ATP = CTP + ADP + phosphate + 2 H(+). It participates in pyrimidine metabolism; CTP biosynthesis via de novo pathway; CTP from UDP: step 2/2. Allosterically activated by GTP, when glutamine is the substrate; GTP has no effect on the reaction when ammonia is the substrate. The allosteric effector GTP functions by stabilizing the protein conformation that binds the tetrahedral intermediate(s) formed during glutamine hydrolysis. Inhibited by the product CTP, via allosteric rather than competitive inhibition. Functionally, catalyzes the ATP-dependent amination of UTP to CTP with either L-glutamine or ammonia as the source of nitrogen. Regulates intracellular CTP levels through interactions with the four ribonucleotide triphosphates. In Chloroflexus aurantiacus (strain ATCC 29366 / DSM 635 / J-10-fl), this protein is CTP synthase.